We begin with the raw amino-acid sequence, 87 residues long: uncharacterized protein (87 aa).

The interval 67–87 (TGGDPREAVVRPADQVEGYTG) is disordered.

This is an uncharacterized protein from Mycobacterium bovis (strain ATCC BAA-935 / AF2122/97).